Consider the following 409-residue polypeptide: Elongation factor Tu, cyanelle (409 aa).

Residues 10–214 (KPHVNIGTIG…AVDEYIPTPE (205 aa)) enclose the tr-type G domain. Residues 19-26 (GHVDHGKT) form a G1 region. Residue 19-26 (GHVDHGKT) participates in GTP binding. Thr26 contacts Mg(2+). Positions 60–64 (GITIN) are G2. The G3 stretch occupies residues 81–84 (DCPG). GTP is bound by residues 81-85 (DCPGH) and 136-139 (NKED). A G4 region spans residues 136-139 (NKED). The tract at residues 174 to 176 (SAL) is G5.

It belongs to the TRAFAC class translation factor GTPase superfamily. Classic translation factor GTPase family. EF-Tu/EF-1A subfamily.

It is found in the plastid. The protein localises to the cyanelle. The catalysed reaction is GTP + H2O = GDP + phosphate + H(+). In terms of biological role, GTP hydrolase that promotes the GTP-dependent binding of aminoacyl-tRNA to the A-site of ribosomes during protein biosynthesis. The polypeptide is Elongation factor Tu, cyanelle (tufA) (Cyanophora paradoxa).